A 270-amino-acid polypeptide reads, in one-letter code: Phosphoribosylformylglycinamidine synthase subunit PurQ (270 aa).

The 247-residue stretch at Ala-5–Glu-251 folds into the Glutamine amidotransferase type-1 domain. Cys-95 serves as the catalytic Nucleophile. Catalysis depends on residues His-236 and Glu-238.

Part of the FGAM synthase complex composed of 1 PurL, 1 PurQ and 2 PurS subunits.

The protein resides in the cytoplasm. The catalysed reaction is N(2)-formyl-N(1)-(5-phospho-beta-D-ribosyl)glycinamide + L-glutamine + ATP + H2O = 2-formamido-N(1)-(5-O-phospho-beta-D-ribosyl)acetamidine + L-glutamate + ADP + phosphate + H(+). The enzyme catalyses L-glutamine + H2O = L-glutamate + NH4(+). It functions in the pathway purine metabolism; IMP biosynthesis via de novo pathway; 5-amino-1-(5-phospho-D-ribosyl)imidazole from N(2)-formyl-N(1)-(5-phospho-D-ribosyl)glycinamide: step 1/2. In terms of biological role, part of the phosphoribosylformylglycinamidine synthase complex involved in the purines biosynthetic pathway. Catalyzes the ATP-dependent conversion of formylglycinamide ribonucleotide (FGAR) and glutamine to yield formylglycinamidine ribonucleotide (FGAM) and glutamate. The FGAM synthase complex is composed of three subunits. PurQ produces an ammonia molecule by converting glutamine to glutamate. PurL transfers the ammonia molecule to FGAR to form FGAM in an ATP-dependent manner. PurS interacts with PurQ and PurL and is thought to assist in the transfer of the ammonia molecule from PurQ to PurL. The protein is Phosphoribosylformylglycinamidine synthase subunit PurQ of Treponema denticola (strain ATCC 35405 / DSM 14222 / CIP 103919 / JCM 8153 / KCTC 15104).